Here is a 206-residue protein sequence, read N- to C-terminus: Probable N-acetyltransferase 14 (206 aa).

One can recognise an N-acetyltransferase domain in the interval 9–206 (LSVREMREEE…TIVQEFRKDI (198 aa)). The next 2 helical transmembrane spans lie at 37-57 (LILY…ASSG) and 60-80 (FILN…IVGL).

This sequence belongs to the camello family.

Its subcellular location is the membrane. In terms of biological role, probable acetyltransferase. The sequence is that of Probable N-acetyltransferase 14 (nat14) from Xenopus tropicalis (Western clawed frog).